Reading from the N-terminus, the 75-residue chain is uncharacterized protein (75 aa).

This is an uncharacterized protein from Escherichia coli (Bacteriophage T4).